The following is a 429-amino-acid chain: Inositol-3-phosphate synthase 1 (429 aa).

A helical transmembrane segment spans residues 12–32 (LGVLVVGVGGAVATTMIVGTL). Residues A22, V23, D79, A116, A165, T167, Y201, S244, R276, D277, and K290 each coordinate NAD(+).

This sequence belongs to the myo-inositol 1-phosphate synthase family. As to quaternary structure, homotetramer. It depends on NAD(+) as a cofactor.

It localises to the membrane. The enzyme catalyses D-glucose 6-phosphate = 1D-myo-inositol 3-phosphate. Its pathway is polyol metabolism; myo-inositol biosynthesis; myo-inositol from D-glucose 6-phosphate: step 1/2. Key enzyme in myo-inositol biosynthesis pathway that catalyzes the conversion of glucose 6-phosphate to 1D-myo-inositol 3-phosphate in a NAD-dependent manner. In Bacteroides thetaiotaomicron (strain ATCC 29148 / DSM 2079 / JCM 5827 / CCUG 10774 / NCTC 10582 / VPI-5482 / E50), this protein is Inositol-3-phosphate synthase 1.